The following is a 92-amino-acid chain: MSKKKGVGSSRNGRDSESKRLGVKRFDGQFVKAGSILVRQRGTKFMPGLNVGRGGDDTLFSKIDGYVKFERKGKNKKAVSVYTEEQFESVAN.

Positions 1–21 are disordered; it reads MSKKKGVGSSRNGRDSESKRL. Basic and acidic residues predominate over residues 12-21; it reads NGRDSESKRL.

It belongs to the bacterial ribosomal protein bL27 family.

The protein is Large ribosomal subunit protein bL27 of Halothermothrix orenii (strain H 168 / OCM 544 / DSM 9562).